The following is a 736-amino-acid chain: Peroxisomal multifunctional enzyme type 2 (736 aa).

The interval Met-1–Glu-305 is (3R)-hydroxyacyl-CoA dehydrogenase. NAD(+) contacts are provided by residues Leu-13–Val-37, Leu-21, and Asp-40. Lys-46 carries the N6-acetyllysine; alternate modification. Residue Lys-46 is modified to N6-succinyllysine; alternate. Ser-52 bears the Phosphoserine mark. 2 positions are modified to N6-succinyllysine: Lys-57 and Lys-68. NAD(+) is bound at residue Ser-75 to Val-76. The residue at position 84 (Lys-84) is an N6-succinyllysine. Position 99 (Asn-99) interacts with NAD(+). A substrate-binding site is contributed by Ser-151. Catalysis depends on Tyr-164, which acts as the Proton acceptor. NAD(+) contacts are provided by residues Tyr-164–Lys-168 and Ala-196–Arg-199. The residue at position 265 (Thr-265) is a Phosphothreonine. Lys-275 bears the N6-succinyllysine mark. Ser-304 and Ser-309 each carry phosphoserine. An enoyl-CoA hydratase 2 region spans residues Ser-322–Leu-622. The residue at position 356 (Lys-356) is an N6-succinyllysine. His-406–Gly-407 lines the (3R)-3-hydroxydecanoyl-CoA pocket. Lys-424 bears the N6-succinyllysine mark. Residues Lys-435, Asp-510 to His-515, Gly-533, and Phe-563 each bind (3R)-3-hydroxydecanoyl-CoA. The MaoC-like domain maps to Ile-484–Asn-600. Lys-565 carries the post-translational modification N6-acetyllysine. 2 positions are modified to N6-succinyllysine: Lys-579 and Lys-663. The region spanning Ser-624 to Leu-736 is the SCP2 domain. At Lys-669 the chain carries N6-acetyllysine. Substrate is bound at residue Gln-706. Lys-707 bears the N6-acetyllysine mark. Residue Gln-724 participates in substrate binding. Lys-725 is modified (N6-succinyllysine). The Microbody targeting signal motif lies at Ala-734–Leu-736.

It belongs to the short-chain dehydrogenases/reductases (SDR) family. As to quaternary structure, homodimer. Present in many tissues with highest concentrations in liver, heart, prostate and testis.

It localises to the peroxisome. The catalysed reaction is a (3R)-3-hydroxyacyl-CoA + NAD(+) = a 3-oxoacyl-CoA + NADH + H(+). It catalyses the reaction a (3R)-3-hydroxyacyl-CoA = a (2E)-enoyl-CoA + H2O. It carries out the reaction (24R,25R)-3alpha,7alpha,12alpha,24-tetrahydroxy-5beta-cholestan-26-oyl-CoA = (24E)-3alpha,7alpha,12alpha-trihydroxy-5beta-cholest-24-en-26-oyl-CoA + H2O. The enzyme catalyses (2E)-octenoyl-CoA + H2O = (3R)-hydroxyoctanoyl-CoA. The catalysed reaction is (3R)-hydroxyoctanoyl-CoA + NAD(+) = 3-oxooctanoyl-CoA + NADH + H(+). It catalyses the reaction (3R)-hydroxyhexadecanoyl-CoA + NAD(+) = 3-oxohexadecanoyl-CoA + NADH + H(+). It carries out the reaction (2E)-hexadecenedioyl-CoA + H2O = (3R)-hydroxyhexadecanedioyl-CoA. The enzyme catalyses (3R)-hydroxyhexadecanedioyl-CoA + NAD(+) = 3-oxohexadecanedioyl-CoA + NADH + H(+). The catalysed reaction is (3R)-hydroxyhexadecanoyl-CoA = (2E)-hexadecenoyl-CoA + H2O. It catalyses the reaction (3R)-3-hydroxydecanoyl-CoA = (2E)-decenoyl-CoA + H2O. It carries out the reaction (3R)-3-hydroxydecanoyl-CoA + NAD(+) = 3-oxodecanoyl-CoA + NADH + H(+). The enzyme catalyses (24R,25R)-3alpha,7alpha,12alpha,24-tetrahydroxy-5beta-cholestan-26-oyl-CoA + NAD(+) = 3alpha,7alpha,12alpha-trihydroxy-24-oxo-5beta-cholestan-26-oyl-CoA + NADH + H(+). The protein operates within lipid metabolism; fatty acid beta-oxidation. Functionally, bifunctional enzyme acting on the peroxisomal fatty acid beta-oxidation pathway. Catalyzes two of the four reactions in fatty acid degradation: hydration of 2-enoyl-CoA (trans-2-enoyl-CoA) to produce (3R)-3-hydroxyacyl-CoA, and dehydrogenation of (3R)-3-hydroxyacyl-CoA to produce 3-ketoacyl-CoA (3-oxoacyl-CoA), which is further metabolized by SCPx. Can use straight-chain and branched-chain fatty acids, as well as bile acid intermediates as substrates. The protein is Peroxisomal multifunctional enzyme type 2 of Homo sapiens (Human).